Reading from the N-terminus, the 363-residue chain is Ribosome-binding ATPase YchF (363 aa).

The 254-residue stretch at 3-256 folds into the OBG-type G domain; it reads FKCGIVGLPN…LEDEEKVDFL (254 aa). Residue 12-17 coordinates ATP; the sequence is NVGKST. 2 residues coordinate Mg(2+): serine 16 and threonine 36. The region spanning 278–361 is the TGS domain; sequence NLQTYFTAGV…QDGDVMHFRF (84 aa).

The protein belongs to the TRAFAC class OBG-HflX-like GTPase superfamily. OBG GTPase family. YchF/OLA1 subfamily. Requires Mg(2+) as cofactor.

In terms of biological role, ATPase that binds to both the 70S ribosome and the 50S ribosomal subunit in a nucleotide-independent manner. In Haemophilus ducreyi (strain 35000HP / ATCC 700724), this protein is Ribosome-binding ATPase YchF.